The chain runs to 130 residues: Small ribosomal subunit protein uS8 (130 aa).

Belongs to the universal ribosomal protein uS8 family.

In Agaricus bisporus (White button mushroom), this protein is Small ribosomal subunit protein uS8 (rps22).